We begin with the raw amino-acid sequence, 1042 residues long: Starch synthase 3, chloroplastic/amyloplastic (1042 aa).

The transit peptide at 1–44 (MISYFLNQDFSRKKQGRMAASGPKSSGPRGFGRRTTVGSAQKRT) directs the protein to the chloroplast. The tract at residues 1–63 (MISYFLNQDF…NATSTATNEV (63 aa)) is disordered. Over residues 54 to 63 (NATSTATNEV) the composition is skewed to polar residues. A coiled-coil region spans residues 247 to 302 (ENFLLEEKLREQEKLAKEEAERERQKEEKRRIEAQKAAIEADRAQAKAETQKRREL). Lys608 serves as a coordination point for ADP-alpha-D-glucose.

This sequence belongs to the glycosyltransferase 1 family. Bacterial/plant glycogen synthase subfamily. As to expression, expressed in leaves and flowers.

The protein localises to the plastid. The protein resides in the chloroplast. It localises to the amyloplast. The enzyme catalyses [(1-&gt;4)-alpha-D-glucosyl](n) + ADP-alpha-D-glucose = [(1-&gt;4)-alpha-D-glucosyl](n+1) + ADP + H(+). Its pathway is glycan biosynthesis; starch biosynthesis. Its function is as follows. Involved in the synthesis of glycan chains within amylopectin in leaves. May play a regulatory role in the control of starch accumulation in plastids. The chain is Starch synthase 3, chloroplastic/amyloplastic (SS3) from Arabidopsis thaliana (Mouse-ear cress).